Reading from the N-terminus, the 454-residue chain is tRNA modification GTPase MnmE (454 aa).

(6S)-5-formyl-5,6,7,8-tetrahydrofolate is bound by residues arginine 23, glutamate 80, and lysine 120. The TrmE-type G domain occupies 216-377 (GMKVVIAGRP…LRNHLKQSMG (162 aa)). Residue asparagine 226 coordinates K(+). GTP-binding positions include 226 to 231 (NAGKSS), 245 to 251 (TDIAGTT), 270 to 273 (DTAG), 335 to 338 (NKAD), and 358 to 360 (SAR). Serine 230 lines the Mg(2+) pocket. K(+) is bound by residues threonine 245, isoleucine 247, and threonine 250. Threonine 251 lines the Mg(2+) pocket. Lysine 454 is a (6S)-5-formyl-5,6,7,8-tetrahydrofolate binding site.

The protein belongs to the TRAFAC class TrmE-Era-EngA-EngB-Septin-like GTPase superfamily. TrmE GTPase family. Homodimer. Heterotetramer of two MnmE and two MnmG subunits. Requires K(+) as cofactor.

The protein localises to the cytoplasm. In terms of biological role, exhibits a very high intrinsic GTPase hydrolysis rate. Involved in the addition of a carboxymethylaminomethyl (cmnm) group at the wobble position (U34) of certain tRNAs, forming tRNA-cmnm(5)s(2)U34. In Escherichia coli (strain SMS-3-5 / SECEC), this protein is tRNA modification GTPase MnmE.